Consider the following 246-residue polypeptide: Purine nucleoside phosphorylase Cgl2154/cg2365 (246 aa).

3 residues coordinate Zn(2+): His-68, Cys-107, and His-124.

The protein belongs to the purine nucleoside phosphorylase YfiH/LACC1 family. As to quaternary structure, homodimer. It depends on Cu(2+) as a cofactor. Requires Zn(2+) as cofactor.

It carries out the reaction adenosine + phosphate = alpha-D-ribose 1-phosphate + adenine. It catalyses the reaction S-methyl-5'-thioadenosine + phosphate = 5-(methylsulfanyl)-alpha-D-ribose 1-phosphate + adenine. The catalysed reaction is inosine + phosphate = alpha-D-ribose 1-phosphate + hypoxanthine. The enzyme catalyses adenosine + H2O + H(+) = inosine + NH4(+). In terms of biological role, purine nucleoside enzyme that catalyzes the phosphorolysis of adenosine and inosine nucleosides, yielding D-ribose 1-phosphate and the respective free bases, adenine and hypoxanthine. Also catalyzes the phosphorolysis of S-methyl-5'-thioadenosine into adenine and S-methyl-5-thio-alpha-D-ribose 1-phosphate. Also has adenosine deaminase activity. This Corynebacterium glutamicum (strain ATCC 13032 / DSM 20300 / JCM 1318 / BCRC 11384 / CCUG 27702 / LMG 3730 / NBRC 12168 / NCIMB 10025 / NRRL B-2784 / 534) protein is Purine nucleoside phosphorylase Cgl2154/cg2365.